A 180-amino-acid polypeptide reads, in one-letter code: Large ribosomal subunit protein uL5 (180 aa).

This sequence belongs to the universal ribosomal protein uL5 family. Part of the 50S ribosomal subunit; part of the 5S rRNA/L5/L18/L25 subcomplex. Contacts the 5S rRNA and the P site tRNA. Forms a bridge to the 30S subunit in the 70S ribosome.

In terms of biological role, this is one of the proteins that bind and probably mediate the attachment of the 5S RNA into the large ribosomal subunit, where it forms part of the central protuberance. In the 70S ribosome it contacts protein S13 of the 30S subunit (bridge B1b), connecting the 2 subunits; this bridge is implicated in subunit movement. Contacts the P site tRNA; the 5S rRNA and some of its associated proteins might help stabilize positioning of ribosome-bound tRNAs. In Chlamydia felis (strain Fe/C-56) (Chlamydophila felis), this protein is Large ribosomal subunit protein uL5.